The primary structure comprises 353 residues: UPF0283 membrane protein YcjF (353 aa).

Basic and acidic residues predominate over residues 1–19 (MSEPLKPRIDFAEPLKEEP). The tract at residues 1–48 (MSEPLKPRIDFAEPLKEEPTSAFKAQQTFSEAESHTFAPAAIDERPED) is disordered. The Periplasmic segment spans residues 1-69 (MSEPLKPRID…LRPKRSLWRK (69 aa)). Residues 70-90 (MVMGGLALFGASVVGQGVQWT) traverse the membrane as a helical segment. The Cytoplasmic segment spans residues 91 to 99 (MNAWQTQDW). Residues 100–120 (VALGGCAAGALIVGAGVGSVV) traverse the membrane as a helical segment. Residues 121–212 (TEWWRLWRLR…ARREISRFAA (92 aa)) lie on the Periplasmic side of the membrane. The helical transmembrane segment at 213-233 (ESTLMIAVSPLALVDMAFIAW) threads the bilayer. Residues 234-353 (RNLRLINRIA…LQKSKSSPEK (120 aa)) are Cytoplasmic-facing.

This sequence belongs to the UPF0283 family.

The protein localises to the cell inner membrane. The chain is UPF0283 membrane protein YcjF (ycjF) from Salmonella typhi.